A 453-amino-acid polypeptide reads, in one-letter code: GTPase Der (453 aa).

EngA-type G domains follow at residues 4–169 and 178–353; these read PVVA…PPTD and INVA…EQHR. GTP-binding positions include 10–17, 57–61, 120–123, 184–191, 231–235, and 296–299; these read GRPNVGKS, DTGGL, NKCE, DTAGI, and NKWD. The 86-residue stretch at 354-439 folds into the KH-like domain; the sequence is RRVSTSVINE…PIRLLWRGKK (86 aa).

It belongs to the TRAFAC class TrmE-Era-EngA-EngB-Septin-like GTPase superfamily. EngA (Der) GTPase family. Associates with the 50S ribosomal subunit.

Functionally, GTPase that plays an essential role in the late steps of ribosome biogenesis. The sequence is that of GTPase Der from Cyanothece sp. (strain PCC 7425 / ATCC 29141).